Reading from the N-terminus, the 493-residue chain is Glycerol kinase (493 aa).

Threonine 11 serves as a coordination point for ADP. Threonine 11, threonine 12, and serine 13 together coordinate ATP. Threonine 11 is a sn-glycerol 3-phosphate binding site. Arginine 15 provides a ligand contact to ADP. Sn-glycerol 3-phosphate-binding residues include arginine 80, glutamate 81, tyrosine 132, and aspartate 241. Residues arginine 80, glutamate 81, tyrosine 132, aspartate 241, and glutamine 242 each coordinate glycerol. ADP is bound by residues threonine 263 and glycine 306. 4 residues coordinate ATP: threonine 263, glycine 306, glutamine 310, and glycine 408. Glycine 408 lines the ADP pocket.

This sequence belongs to the FGGY kinase family.

It carries out the reaction glycerol + ATP = sn-glycerol 3-phosphate + ADP + H(+). It participates in polyol metabolism; glycerol degradation via glycerol kinase pathway; sn-glycerol 3-phosphate from glycerol: step 1/1. Inhibited by fructose 1,6-bisphosphate (FBP). In terms of biological role, key enzyme in the regulation of glycerol uptake and metabolism. Catalyzes the phosphorylation of glycerol to yield sn-glycerol 3-phosphate. In Cereibacter sphaeroides (strain ATCC 17023 / DSM 158 / JCM 6121 / CCUG 31486 / LMG 2827 / NBRC 12203 / NCIMB 8253 / ATH 2.4.1.) (Rhodobacter sphaeroides), this protein is Glycerol kinase.